We begin with the raw amino-acid sequence, 204 residues long: dITP/XTP pyrophosphatase (204 aa).

Position 8–13 (8–13 (SNNAHK)) interacts with substrate. Mg(2+) is bound by residues E41 and D76. D76 functions as the Proton acceptor in the catalytic mechanism. Substrate contacts are provided by residues S77, 159–162 (FGYD), K182, and 187–188 (HR).

The protein belongs to the HAM1 NTPase family. In terms of assembly, homodimer. Requires Mg(2+) as cofactor.

It catalyses the reaction XTP + H2O = XMP + diphosphate + H(+). The catalysed reaction is dITP + H2O = dIMP + diphosphate + H(+). The enzyme catalyses ITP + H2O = IMP + diphosphate + H(+). Functionally, pyrophosphatase that catalyzes the hydrolysis of nucleoside triphosphates to their monophosphate derivatives, with a high preference for the non-canonical purine nucleotides XTP (xanthosine triphosphate), dITP (deoxyinosine triphosphate) and ITP. Seems to function as a house-cleaning enzyme that removes non-canonical purine nucleotides from the nucleotide pool, thus preventing their incorporation into DNA/RNA and avoiding chromosomal lesions. The protein is dITP/XTP pyrophosphatase of Clostridium perfringens (strain 13 / Type A).